A 1439-amino-acid chain; its full sequence is MGARASILRGEKLDAWEKIKLRPGGKKHYMLKHLVWANRELEKFALNPDLLDTSAGCKQIIKQLQPALQTGTEELKSLFNTVATLYCVHQKIEIKDTKEALDKIEEEQNESQQKTQQAGAADRGKDSQNYPIVQNMQGQMVHQPISARTLNAWVKVVEEKAFSPEVIPMFTALSEGATPQDLNTMLNTVGGHQAAMQMLKDTINEEAAEWDRLHPVHAGPVAPGQMRDPRGSDIAGTTSTLQEQIAWMTGNPPVPVGDIYKRWIILGLNKIVRMYSPVSILDIKQGPKEPFRDYVDRFFKTLRAEQATQDVKNWMTDTLLVQNANPDCKTILRALGPGASLEEMMTACQGVGGPAHKARVLAEAMSQVNNTTIMMQKSNFKGPKRAIKCFNCGKEGHLARNCRAPRKKGCWKCGKEGHQMKDCTERQANFFRETLAFQQGKAREFPSEQTRANSPTRESQTRANSPTTRELQVRGSNTFSEAGAERQGSLNFPQITLWQRPLVTIKIGGQLKEALLDTGADDTVLEEINLPGKWKPKMIGGIGGFIKVRQYDQIIIEICGKKAIGTVLVGPTPVNIIGRNMLTQLGRTLNFPISPIETVPVKLKPGMDGPKVKQWPLTEEKIKALTAICEEMEQEGKISRIGPENPYNTPVFAIKKKDSTKWRKLVDFRELNKRTQDFWEVQLGIPHPAGLKKKKSVTVLDVGDAYFSVPLDEGFRKYTAFTIPSTNNETPGIRYQYNVLPQGWKGSPPIFQSSMPQILEPFRAPNPEIVIYQYMDDLYVGSDLEIGQHRAPIEELREHLLKWGFTTPDKKHQKEPPFLWMGYELHPDKWTVQPIQLPEKDSWTVNDIQKLVGKLNWASQIYPGIKVRQLCKLLRGAKALTDIVTLTEEAELELAENREILKEPVHGVFYDPSKDLIAEIQKQGNDQWTFQFYQEPFKNLKTGKFAKRGTAHTNDVKQLTAVVQKIALESIVIWGKTPKFRLPIQKETWEAWWTDYWQATWIPEWEFVNTPPLVKLWYQLEKEPIAGVETFYVDGAANRETKIGKAGYVTDRGRQKIVSLTETTNQKTELQAIQLALQDSGSEVNIVTDSQYALGIILAQPDKSESEIVNQIIEQLISKERVYLSWVPAHKGIGGNEQVDKLVSSGIRKVLFLDGIDKAQEEHEKYHSNWRAMANEFNIPPVVPKEIVACCDKCQLKGEAIHGQVNCSPGIWQLDCTHLEGKIILVAVHVASGYIEAEVIPAETGQETAYFLLKLAGRWPVRVIHTDNGSNFTSNAVKAACWWAGIQQEFGIPYNPQSQGVVESMNKELKKIIGQVREQAEHLKTAVQMAVFIHNFKRRGGIGGYSAGERIIDIIASDIQTKELQNQILKIQNFRVYYRDSRDPIWKGPAKLLWKGEGAVVIQDNSDIKVVPRRKAKIIRDYGKQMAGADCVAGRQDED.

Residue G2 is the site of N-myristoyl glycine; by host attachment. Residues I7–L31 are interaction with Gp41. An interaction with host CALM1 region spans residues L8–K43. The segment at K12–I19 is interaction with host AP3D1. An interaction with membrane phosphatidylinositol 4,5-bisphosphate and RNA region spans residues D14–H33. The Nuclear export signal motif lies at W16–R22. The Nuclear localization signal signature appears at K26–K32. The interaction with membrane phosphatidylinositol 4,5-bisphosphate stretch occupies residues E73–S77. A disordered region spans residues E105–Q128. Y130 carries the post-translational modification Phosphotyrosine; by host. An interaction with human PPIA/CYPA and NUP153 region spans residues N187–Q225. The interval Y275–L361 is dimerization/Multimerization of capsid protein p24. 2 consecutive CCHC-type zinc fingers follow at residues I387–A404 and K408–E425. A disordered region spans residues K441 to E485. The segment covering S447 to S480 has biased composition (polar residues). Residues P493–L497 are dimerization of protease. Residues K512–M581 enclose the Peptidase A2 domain. Residue D517 is the For protease activity; shared with dimeric partner of the active site. Dimerization of protease regions lie at residues G541 to K547 and N580 to P592. Positions E635–L825 constitute a Reverse transcriptase domain. D701, D776, and D777 together coordinate Mg(2+). An RT 'primer grip' region spans residues F818–H826. The Tryptophan repeat motif motif lies at W989–W1005. Residues I1025 to R1148 form the RNase H type-1 domain. Mg(2+) contacts are provided by D1034, E1069, D1089, and D1140. An Integrase-type zinc finger spans residues D1154–Q1195. Positions 1163, 1167, 1191, and 1194 each coordinate Zn(2+). The 151-residue stretch at V1205–I1355 folds into the Integrase catalytic domain. Mg(2+)-binding residues include D1215, D1267, and E1303. A DNA-binding region (integrase-type) is located at residues F1374–D1421.

Homotrimer; further assembles as hexamers of trimers. Interacts with gp41 (via C-terminus). Interacts with host CALM1; this interaction induces a conformational change in the Matrix protein, triggering exposure of the myristate group. Interacts with host AP3D1; this interaction allows the polyprotein trafficking to multivesicular bodies during virus assembly. Part of the pre-integration complex (PIC) which is composed of viral genome, matrix protein, Vpr and integrase. As to quaternary structure, homodimer; the homodimer further multimerizes as homohexamers or homopentamers. Interacts with human PPIA/CYPA; This interaction stabilizes the capsid. Interacts with human NUP153. Interacts with host PDZD8; this interaction stabilizes the capsid. Interacts with monkey TRIM5; this interaction destabilizes the capsid. In terms of assembly, homodimer, whose active site consists of two apposed aspartic acid residues. Heterodimer of p66 RT and p51 RT (RT p66/p51). Heterodimerization of RT is essential for DNA polymerase activity. The overall folding of the subdomains is similar in p66 RT and p51 RT but the spatial arrangements of the subdomains are dramatically different. As to quaternary structure, homotetramer; may further associate as a homohexadecamer. Part of the pre-integration complex (PIC) which is composed of viral genome, matrix protein, Vpr and integrase. Interacts with human SMARCB1/INI1 and human PSIP1/LEDGF isoform 1. Interacts with human KPNA3; this interaction might play a role in nuclear import of the pre-integration complex. Interacts with human NUP153; this interaction might play a role in nuclear import of the pre-integration complex. Mg(2+) is required as a cofactor. In terms of processing, specific enzymatic cleavages by the viral protease yield mature proteins. The protease is released by autocatalytic cleavage. The polyprotein is cleaved during and after budding, this process is termed maturation. Proteolytic cleavage of p66 RT removes the RNase H domain to yield the p51 RT subunit. Nucleocapsid protein p7 might be further cleaved after virus entry. Tyrosine phosphorylated presumably in the virion by a host kinase. Phosphorylation is apparently not a major regulator of membrane association. Post-translationally, phosphorylated possibly by host MAPK1; this phosphorylation is necessary for Pin1-mediated virion uncoating. In terms of processing, methylated by host PRMT6, impairing its function by reducing RNA annealing and the initiation of reverse transcription.

It is found in the host cell membrane. The protein resides in the host endosome. Its subcellular location is the host multivesicular body. The protein localises to the virion membrane. It localises to the host nucleus. It is found in the host cytoplasm. The protein resides in the virion. It catalyses the reaction Specific for a P1 residue that is hydrophobic, and P1' variable, but often Pro.. The catalysed reaction is Endohydrolysis of RNA in RNA/DNA hybrids. Three different cleavage modes: 1. sequence-specific internal cleavage of RNA. Human immunodeficiency virus type 1 and Moloney murine leukemia virus enzymes prefer to cleave the RNA strand one nucleotide away from the RNA-DNA junction. 2. RNA 5'-end directed cleavage 13-19 nucleotides from the RNA end. 3. DNA 3'-end directed cleavage 15-20 nucleotides away from the primer terminus.. It carries out the reaction 3'-end directed exonucleolytic cleavage of viral RNA-DNA hybrid.. The enzyme catalyses DNA(n) + a 2'-deoxyribonucleoside 5'-triphosphate = DNA(n+1) + diphosphate. Protease: The viral protease is inhibited by many synthetic protease inhibitors (PIs), such as amprenavir, atazanavir, indinavir, loprinavir, nelfinavir, ritonavir and saquinavir. Use of protease inhibitors in tritherapy regimens permit more ambitious therapeutic strategies. Reverse transcriptase/ribonuclease H: RT can be inhibited either by nucleoside RT inhibitors (NRTIs) or by non nucleoside RT inhibitors (NNRTIs). NRTIs act as chain terminators, whereas NNRTIs inhibit DNA polymerization by binding a small hydrophobic pocket near the RT active site and inducing an allosteric change in this region. Classical NRTIs are abacavir, adefovir (PMEA), didanosine (ddI), lamivudine (3TC), stavudine (d4T), tenofovir (PMPA), zalcitabine (ddC), and zidovudine (AZT). Classical NNRTIs are atevirdine (BHAP U-87201E), delavirdine, efavirenz (DMP-266), emivirine (I-EBU), and nevirapine (BI-RG-587). The tritherapies used as a basic effective treatment of AIDS associate two NRTIs and one NNRTI. Its function is as follows. Mediates, with Gag polyprotein, the essential events in virion assembly, including binding the plasma membrane, making the protein-protein interactions necessary to create spherical particles, recruiting the viral Env proteins, and packaging the genomic RNA via direct interactions with the RNA packaging sequence (Psi). Gag-Pol polyprotein may regulate its own translation, by the binding genomic RNA in the 5'-UTR. At low concentration, the polyprotein would promote translation, whereas at high concentration, the polyprotein would encapsidate genomic RNA and then shut off translation. Targets the polyprotein to the plasma membrane via a multipartite membrane-binding signal, that includes its myristoylated N-terminus. Matrix protein is part of the pre-integration complex. Implicated in the release from host cell mediated by Vpu. Binds to RNA. Functionally, forms the conical core that encapsulates the genomic RNA-nucleocapsid complex in the virion. Most core are conical, with only 7% tubular. The core is constituted by capsid protein hexamer subunits. The core is disassembled soon after virion entry. Host restriction factors such as TRIM5-alpha or TRIMCyp bind retroviral capsids and cause premature capsid disassembly, leading to blocks in reverse transcription. Capsid restriction by TRIM5 is one of the factors which restricts HIV-1 to the human species. Host PIN1 apparently facilitates the virion uncoating. On the other hand, interactions with PDZD8 or CYPA stabilize the capsid. In terms of biological role, encapsulates and protects viral dimeric unspliced genomic RNA (gRNA). Binds these RNAs through its zinc fingers. Acts as a nucleic acid chaperone which is involved in rearangement of nucleic acid secondary structure during gRNA retrotranscription. Also facilitates template switch leading to recombination. As part of the polyprotein, participates in gRNA dimerization, packaging, tRNA incorporation and virion assembly. Its function is as follows. Aspartyl protease that mediates proteolytic cleavages of Gag and Gag-Pol polyproteins during or shortly after the release of the virion from the plasma membrane. Cleavages take place as an ordered, step-wise cascade to yield mature proteins. This process is called maturation. Displays maximal activity during the budding process just prior to particle release from the cell. Also cleaves Nef and Vif, probably concomitantly with viral structural proteins on maturation of virus particles. Hydrolyzes host EIF4GI and PABP1 in order to shut off the capped cellular mRNA translation. The resulting inhibition of cellular protein synthesis serves to ensure maximal viral gene expression and to evade host immune response. Also mediates cleavage of host YTHDF3. Mediates cleavage of host CARD8, thereby activating the CARD8 inflammasome, leading to the clearance of latent HIV-1 in patient CD4(+) T-cells after viral reactivation; in contrast, HIV-1 can evade CARD8-sensing when its protease remains inactive in infected cells prior to viral budding. Multifunctional enzyme that converts the viral RNA genome into dsDNA in the cytoplasm, shortly after virus entry into the cell. This enzyme displays a DNA polymerase activity that can copy either DNA or RNA templates, and a ribonuclease H (RNase H) activity that cleaves the RNA strand of RNA-DNA heteroduplexes in a partially processive 3' to 5' endonucleasic mode. Conversion of viral genomic RNA into dsDNA requires many steps. A tRNA(3)-Lys binds to the primer-binding site (PBS) situated at the 5'-end of the viral RNA. RT uses the 3' end of the tRNA primer to perform a short round of RNA-dependent minus-strand DNA synthesis. The reading proceeds through the U5 region and ends after the repeated (R) region which is present at both ends of viral RNA. The portion of the RNA-DNA heteroduplex is digested by the RNase H, resulting in a ssDNA product attached to the tRNA primer. This ssDNA/tRNA hybridizes with the identical R region situated at the 3' end of viral RNA. This template exchange, known as minus-strand DNA strong stop transfer, can be either intra- or intermolecular. RT uses the 3' end of this newly synthesized short ssDNA to perform the RNA-dependent minus-strand DNA synthesis of the whole template. RNase H digests the RNA template except for two polypurine tracts (PPTs) situated at the 5'-end and near the center of the genome. It is not clear if both polymerase and RNase H activities are simultaneous. RNase H probably can proceed both in a polymerase-dependent (RNA cut into small fragments by the same RT performing DNA synthesis) and a polymerase-independent mode (cleavage of remaining RNA fragments by free RTs). Secondly, RT performs DNA-directed plus-strand DNA synthesis using the PPTs that have not been removed by RNase H as primers. PPTs and tRNA primers are then removed by RNase H. The 3' and 5' ssDNA PBS regions hybridize to form a circular dsDNA intermediate. Strand displacement synthesis by RT to the PBS and PPT ends produces a blunt ended, linear dsDNA copy of the viral genome that includes long terminal repeats (LTRs) at both ends. Functionally, catalyzes viral DNA integration into the host chromosome, by performing a series of DNA cutting and joining reactions. This enzyme activity takes place after virion entry into a cell and reverse transcription of the RNA genome in dsDNA. The first step in the integration process is 3' processing. This step requires a complex comprising the viral genome, matrix protein, Vpr and integrase. This complex is called the pre-integration complex (PIC). The integrase protein removes 2 nucleotides from each 3' end of the viral DNA, leaving recessed CA OH's at the 3' ends. In the second step, the PIC enters cell nucleus. This process is mediated through integrase and Vpr proteins, and allows the virus to infect a non dividing cell. This ability to enter the nucleus is specific of lentiviruses, other retroviruses cannot and rely on cell division to access cell chromosomes. In the third step, termed strand transfer, the integrase protein joins the previously processed 3' ends to the 5' ends of strands of target cellular DNA at the site of integration. The 5'-ends are produced by integrase-catalyzed staggered cuts, 5 bp apart. A Y-shaped, gapped, recombination intermediate results, with the 5'-ends of the viral DNA strands and the 3' ends of target DNA strands remaining unjoined, flanking a gap of 5 bp. The last step is viral DNA integration into host chromosome. This involves host DNA repair synthesis in which the 5 bp gaps between the unjoined strands are filled in and then ligated. Since this process occurs at both cuts flanking the HIV genome, a 5 bp duplication of host DNA is produced at the ends of HIV-1 integration. Alternatively, Integrase may catalyze the excision of viral DNA just after strand transfer, this is termed disintegration. The chain is Gag-Pol polyprotein (gag-pol) from Human immunodeficiency virus type 1 group M subtype C (isolate ETH2220) (HIV-1).